The following is a 118-amino-acid chain: Basic phospholipase A2 2 (118 aa).

7 disulfides stabilise this stretch: Cys-11–Cys-71, Cys-27–Cys-117, Cys-29–Cys-45, Cys-44–Cys-98, Cys-51–Cys-91, Cys-60–Cys-84, and Cys-78–Cys-89. Ca(2+) is bound by residues Tyr-28, Gly-30, and Gly-32. Residue His-48 is part of the active site. Asp-49 contributes to the Ca(2+) binding site. Asp-92 is a catalytic residue.

It belongs to the phospholipase A2 family. Group I subfamily. D49 sub-subfamily. Ca(2+) serves as cofactor. As to expression, expressed by the venom gland.

It localises to the secreted. It carries out the reaction a 1,2-diacyl-sn-glycero-3-phosphocholine + H2O = a 1-acyl-sn-glycero-3-phosphocholine + a fatty acid + H(+). Its function is as follows. Snake venom phospholipase A2 (PLA2) that inhibits neuromuscular transmission by blocking acetylcholine release from the nerve termini. PLA2 catalyzes the calcium-dependent hydrolysis of the 2-acyl groups in 3-sn-phosphoglycerides. This is Basic phospholipase A2 2 from Laticauda colubrina (Yellow-lipped sea krait).